The chain runs to 45 residues: Large ribosomal subunit protein bL34c (45 aa).

The interval 1–21 (MIQRTLTGTNRKKTKRSGFRS) is disordered. The segment covering 10–19 (NRKKTKRSGF) has biased composition (basic residues).

It belongs to the bacterial ribosomal protein bL34 family.

It is found in the plastid. It localises to the chloroplast. The polypeptide is Large ribosomal subunit protein bL34c (rpl34) (Cyanidium caldarium (Red alga)).